The sequence spans 391 residues: Mannonate dehydratase (391 aa).

Belongs to the mannonate dehydratase family. Fe(2+) is required as a cofactor. Requires Mn(2+) as cofactor.

It carries out the reaction D-mannonate = 2-dehydro-3-deoxy-D-gluconate + H2O. Its pathway is carbohydrate metabolism; pentose and glucuronate interconversion. Its function is as follows. Catalyzes the dehydration of D-mannonate. The protein is Mannonate dehydratase of Marinomonas sp. (strain MWYL1).